The sequence spans 476 residues: Cys-Gly metallodipeptidase dug1 (476 aa).

Histidine 99 contacts Zn(2+). The active site involves aspartate 101. Aspartate 133 is a Zn(2+) binding site. Glutamate 167 acts as the Proton acceptor in catalysis. Zn(2+)-binding residues include glutamate 168, aspartate 196, and histidine 446.

It belongs to the peptidase M20A family. As to quaternary structure, homodimer. Component of the GSH degradosomal complex. Requires Zn(2+) as cofactor. The cofactor is Mn(2+).

Its subcellular location is the cytoplasm. Its function is as follows. Catalytic component of the GSH degradosomal complex involved in the degradation of glutathione (GSH) and other peptides containing a gamma-glu-X bond. Has a Gly-Cys dipeptidase activity. The polypeptide is Cys-Gly metallodipeptidase dug1 (dug1) (Schizosaccharomyces pombe (strain 972 / ATCC 24843) (Fission yeast)).